The primary structure comprises 286 residues: Shikimate dehydrogenase (NADP(+)) (286 aa).

Shikimate contacts are provided by residues 19–21 and T66; that span reads SLS. The Proton acceptor role is filled by K70. 2 residues coordinate shikimate: N91 and D107. Residues 129 to 133 and L229 each bind NADP(+); that span reads GSGGA. Shikimate is bound at residue Y231. Position 252 (G252) interacts with NADP(+).

This sequence belongs to the shikimate dehydrogenase family. Homodimer.

It catalyses the reaction shikimate + NADP(+) = 3-dehydroshikimate + NADPH + H(+). Its pathway is metabolic intermediate biosynthesis; chorismate biosynthesis; chorismate from D-erythrose 4-phosphate and phosphoenolpyruvate: step 4/7. Involved in the biosynthesis of the chorismate, which leads to the biosynthesis of aromatic amino acids. Catalyzes the reversible NADPH linked reduction of 3-dehydroshikimate (DHSA) to yield shikimate (SA). The sequence is that of Shikimate dehydrogenase (NADP(+)) from Prochlorococcus marinus (strain MIT 9312).